The following is a 399-amino-acid chain: S-adenosylmethionine synthase (399 aa).

His-15 provides a ligand contact to ATP. Residue Asp-17 participates in Mg(2+) binding. Glu-43 is a binding site for K(+). L-methionine contacts are provided by Glu-56 and Gln-99. Residues 99 to 109 (QSADIAQGVDN) are flexible loop. Residues 174–176 (DGK), 244–245 (RF), Asp-253, 259–260 (RK), Ala-276, and Lys-280 contribute to the ATP site. Asp-253 lines the L-methionine pocket. Residue Lys-284 coordinates L-methionine.

The protein belongs to the AdoMet synthase family. As to quaternary structure, homotetramer; dimer of dimers. Mg(2+) is required as a cofactor. K(+) serves as cofactor.

The protein localises to the cytoplasm. The enzyme catalyses L-methionine + ATP + H2O = S-adenosyl-L-methionine + phosphate + diphosphate. It participates in amino-acid biosynthesis; S-adenosyl-L-methionine biosynthesis; S-adenosyl-L-methionine from L-methionine: step 1/1. Functionally, catalyzes the formation of S-adenosylmethionine (AdoMet) from methionine and ATP. The overall synthetic reaction is composed of two sequential steps, AdoMet formation and the subsequent tripolyphosphate hydrolysis which occurs prior to release of AdoMet from the enzyme. In Salinispora tropica (strain ATCC BAA-916 / DSM 44818 / JCM 13857 / NBRC 105044 / CNB-440), this protein is S-adenosylmethionine synthase.